A 343-amino-acid polypeptide reads, in one-letter code: N-acetyl-gamma-glutamyl-phosphate reductase (343 aa).

Residue C147 is part of the active site.

It belongs to the NAGSA dehydrogenase family. Type 1 subfamily.

It is found in the cytoplasm. It carries out the reaction N-acetyl-L-glutamate 5-semialdehyde + phosphate + NADP(+) = N-acetyl-L-glutamyl 5-phosphate + NADPH + H(+). It functions in the pathway amino-acid biosynthesis; L-arginine biosynthesis; N(2)-acetyl-L-ornithine from L-glutamate: step 3/4. Functionally, catalyzes the NADPH-dependent reduction of N-acetyl-5-glutamyl phosphate to yield N-acetyl-L-glutamate 5-semialdehyde. This chain is N-acetyl-gamma-glutamyl-phosphate reductase, found in Listeria monocytogenes serovar 1/2a (strain ATCC BAA-679 / EGD-e).